Reading from the N-terminus, the 595-residue chain is MGKKSRVKTQKSGTGATATVSPKEILNLTSELLQKCSSPAPGPGKEWEEYVQIRTLVEKIRKKQKGLSVTFDGKREDYFPDLMKWASENGASVEGFEMVNFKEEGFGLRATRDIKAEELFLWVPRKLLMTVESAKNSVLGPLYSQDRILQAMGNIALAFHLLCERASPNSFWQPYIQTLPSEYDTPLYFEEDEVRYLQSTQAIHDVFSQYKNTARQYAYFYKVIQTHPHANKLPLKDSFTYEDYRWAVSSVMTRQNQIPTEDGSRVTLALIPLWDMCNHTNGLITTGYNLEDDRCECVALQDFRAGEQIYIFYGTRSNAEFVIHSGFFFDNNSHDRVKIKLGVSKSDRLYAMKAEVLARAGIPTSSVFALHFTEPPISAQLLAFLRVFCMTEEELKEHLLGDNAIDRIFTLGNSEFPVSWDNEVKLWTFLEDRASLLLKTYKTTIEEDKSVLKNQDLSVRAKMAIKLRLGEKEILEKAVKSAAGNREYYRQQMEEKAPLPKYEESNLGLLESSVGDSRLPLVLRNLEEEAGVQDALNIREAISKAKTTENGLVNGENSIPNGTRSENENLNQEGSKRAVEDAKGSSSDSTDEVKE.

The tract at residues Met1–Pro22 is disordered. A compositionally biased stretch (polar residues) spans Gln10–Val20. S-adenosyl-L-methionine-binding positions include Arg75, Glu104–Phe106, Arg254, Asp275–His279, and Ser325–Phe327. One can recognise an SET domain in the interval Glu94–Gly314. Ser513 bears the Phosphoserine mark. Residues Glu549–Glu573 are compositionally biased toward polar residues. The interval Glu549–Glu595 is disordered. Over residues Gly574 to Lys583 the composition is skewed to basic and acidic residues.

This sequence belongs to the class V-like SAM-binding methyltransferase superfamily. SETD3 actin-histidine methyltransferase family. As to quaternary structure, interacts with MYOD1. Post-translationally, phosphorylated by GSK3B, which is required for recognition by the SCF(FBXW7) complex and subsequent degradation. In terms of processing, ubiquitinated by the SCF(FBXW7) complex following phosphorylation by GSK3B, leading to its degradation by the proteasome.

The protein localises to the cytoplasm. Its subcellular location is the nucleus. It carries out the reaction L-histidyl-[protein] + S-adenosyl-L-methionine = N(tele)-methyl-L-histidyl-[protein] + S-adenosyl-L-homocysteine + H(+). Functionally, protein-histidine N-methyltransferase that specifically mediates 3-methylhistidine (tele-methylhistidine) methylation of actin at 'His-73'. Histidine methylation of actin is required for smooth muscle contraction of the laboring uterus during delivery. Does not have protein-lysine N-methyltransferase activity and probably only catalyzes histidine methylation of actin. The sequence is that of Actin-histidine N-methyltransferase from Plecturocebus moloch (Dusky titi monkey).